The sequence spans 475 residues: ATP synthase subunit beta (475 aa).

Residue 148 to 155 coordinates ATP; it reads GGAGVGKT.

The protein belongs to the ATPase alpha/beta chains family. As to quaternary structure, F-type ATPases have 2 components, CF(1) - the catalytic core - and CF(0) - the membrane proton channel. CF(1) has five subunits: alpha(3), beta(3), gamma(1), delta(1), epsilon(1). CF(0) has three main subunits: a(1), b(2) and c(9-12). The alpha and beta chains form an alternating ring which encloses part of the gamma chain. CF(1) is attached to CF(0) by a central stalk formed by the gamma and epsilon chains, while a peripheral stalk is formed by the delta and b chains.

The protein localises to the cell inner membrane. The catalysed reaction is ATP + H2O + 4 H(+)(in) = ADP + phosphate + 5 H(+)(out). Its function is as follows. Produces ATP from ADP in the presence of a proton gradient across the membrane. The catalytic sites are hosted primarily by the beta subunits. In Psychrobacter sp. (strain PRwf-1), this protein is ATP synthase subunit beta.